Here is a 354-residue protein sequence, read N- to C-terminus: MKIKQVHVRASKIKLKETFTIALGTIESADSAIVEIETEEGLVGYGEGGPGIFITGETLAGTLETIELFGQAIIGLNPFNIEKIHEVMDKISAFAPAAKAAIDIACYDLMGQKAQLPLYQLLGGYDNQVITDITLGIDEPNVMAQKAVEKVKLGFDTLKIKVGTGIEADIARVKAIREAVGFDIKLRLDANQAWTPKDAVKAIQALADYQIELVEQPVKRRDLEGLKYVTSQVNTTIMADESCFDAQDALELVKKGTVDVINIKLMKCGGIHEALKINQICETAGIECMIGCMAEETTIGITAAAHLAAAQKNITRADLDATFGLETAPVTGGVSLEAKPLLELGEAAGLGISH.

Substrate-binding positions include T134, K159, and 159 to 161 (KIK). Position 189 (D189) interacts with Mg(2+). Residue N191 participates in substrate binding. Mg(2+)-binding residues include E215 and D240. Substrate is bound by residues K264, 292-295 (CMAE), and 318-320 (DLD).

This sequence belongs to the mandelate racemase/muconate lactonizing enzyme family. It depends on Mg(2+) as a cofactor.

Functionally, catalyzes the epimerization of L-Ile-L-Tyr to L-Ile-D-Tyr (in vitro). Catalyzes the epimerization of dipeptides, with a preference for substrates with a hydrophobic or basic amino acid in the first position, followed by an aromatic residue in the second position. Has epimerase activity with L-Ile-L-Tyr, L-Val-L-Tyr and L-Arg-L-Tyr (in vitro). The sequence is that of Hydrophobic dipeptide epimerase from Enterococcus faecalis (strain ATCC 700802 / V583).